The primary structure comprises 331 residues: Phosphoenolpyruvate transferase (331 aa).

D63 is a binding site for 7,8-didemethyl-8-hydroxy-5-deazariboflavin.

It belongs to the CofD family. In terms of assembly, homodimer. Mg(2+) serves as cofactor.

The catalysed reaction is enolpyruvoyl-2-diphospho-5'-guanosine + 7,8-didemethyl-8-hydroxy-5-deazariboflavin = dehydro coenzyme F420-0 + GMP + H(+). The protein operates within cofactor biosynthesis; coenzyme F420 biosynthesis. Catalyzes the transfer of the phosphoenolpyruvate moiety from enoylpyruvoyl-2-diphospho-5'-guanosine (EPPG) to 7,8-didemethyl-8-hydroxy-5-deazariboflavin (FO) with the formation of dehydro coenzyme F420-0 and GMP. This is Phosphoenolpyruvate transferase from Mycobacterium sp. (strain KMS).